The sequence spans 209 residues: MANKKHKASSQRWLDEHFDDEYVKKAQRLGLRSRAVFKLEEINIKDRLIKPGMKVVDLGAAPGGWSEYAVKVVGDKGQVVACDILPMDAIVGVDFLEGDFREEEVLDALLTRINGKNIDVVMSDMAANMTGNESADSARSMYLVELALDMCSQVLKPNGAFVVKVFQGAGFEDYMKATRAVFKAVKTRKPESSRARSREVYLVATGYKG.

Residues Gly-63, Trp-65, Asp-83, Asp-99, and Asp-124 each contribute to the S-adenosyl-L-methionine site. Lys-164 functions as the Proton acceptor in the catalytic mechanism.

This sequence belongs to the class I-like SAM-binding methyltransferase superfamily. RNA methyltransferase RlmE family.

Its subcellular location is the cytoplasm. It catalyses the reaction uridine(2552) in 23S rRNA + S-adenosyl-L-methionine = 2'-O-methyluridine(2552) in 23S rRNA + S-adenosyl-L-homocysteine + H(+). Specifically methylates the uridine in position 2552 of 23S rRNA at the 2'-O position of the ribose in the fully assembled 50S ribosomal subunit. This Colwellia psychrerythraea (strain 34H / ATCC BAA-681) (Vibrio psychroerythus) protein is Ribosomal RNA large subunit methyltransferase E.